Reading from the N-terminus, the 152-residue chain is Transcriptional regulator MraZ (152 aa).

SpoVT-AbrB domains are found at residues 5–52 (ATLV…PLPE) and 81–124 (ASEC…DETT).

It belongs to the MraZ family. As to quaternary structure, forms oligomers.

The protein localises to the cytoplasm. It is found in the nucleoid. In terms of biological role, negatively regulates its own expression and that of the subsequent genes in the proximal part of the division and cell wall (dcw) gene cluster. Acts by binding directly to DNA. May also regulate the expression of genes outside the dcw cluster. This chain is Transcriptional regulator MraZ, found in Citrobacter koseri (strain ATCC BAA-895 / CDC 4225-83 / SGSC4696).